Here is a 104-residue protein sequence, read N- to C-terminus: ATP synthase subunit c (104 aa).

A run of 2 helical transmembrane segments spans residues 31 to 51 and 75 to 95; these read SMIAAGLGLGLAALGGAIGMG and MFIALAMIEAQVIYALVIALI.

Belongs to the ATPase C chain family. As to quaternary structure, F-type ATPases have 2 components, F(1) - the catalytic core - and F(0) - the membrane proton channel. F(1) has five subunits: alpha(3), beta(3), gamma(1), delta(1), epsilon(1). F(0) has three main subunits: a(1), b(2) and c(10-14). The alpha and beta chains form an alternating ring which encloses part of the gamma chain. F(1) is attached to F(0) by a central stalk formed by the gamma and epsilon chains, while a peripheral stalk is formed by the delta and b chains.

It localises to the cell inner membrane. Its function is as follows. F(1)F(0) ATP synthase produces ATP from ADP in the presence of a proton or sodium gradient. F-type ATPases consist of two structural domains, F(1) containing the extramembraneous catalytic core and F(0) containing the membrane proton channel, linked together by a central stalk and a peripheral stalk. During catalysis, ATP synthesis in the catalytic domain of F(1) is coupled via a rotary mechanism of the central stalk subunits to proton translocation. Functionally, key component of the F(0) channel; it plays a direct role in translocation across the membrane. A homomeric c-ring of between 10-14 subunits forms the central stalk rotor element with the F(1) delta and epsilon subunits. This chain is ATP synthase subunit c, found in Sulfurimonas denitrificans (strain ATCC 33889 / DSM 1251) (Thiomicrospira denitrificans (strain ATCC 33889 / DSM 1251)).